Consider the following 141-residue polypeptide: Large ribosomal subunit protein uL11 (141 aa).

This sequence belongs to the universal ribosomal protein uL11 family. Part of the ribosomal stalk of the 50S ribosomal subunit. Interacts with L10 and the large rRNA to form the base of the stalk. L10 forms an elongated spine to which L12 dimers bind in a sequential fashion forming a multimeric L10(L12)X complex. Post-translationally, one or more lysine residues are methylated.

Forms part of the ribosomal stalk which helps the ribosome interact with GTP-bound translation factors. The polypeptide is Large ribosomal subunit protein uL11 (Chlamydia trachomatis serovar A (strain ATCC VR-571B / DSM 19440 / HAR-13)).